The sequence spans 173 residues: Small ribosomal subunit protein uS9 (173 aa).

A compositionally biased stretch (polar residues) spans 1–15; it reads MTDTPTENLENTEVT. 2 disordered regions span residues 1-26 and 135-173; these read MTDT…EIAY and EASR…YSKR. Residues 154 to 173 are compositionally biased toward basic residues; sequence KERKKAGLKKARKAPQYSKR.

This sequence belongs to the universal ribosomal protein uS9 family.

This Cutibacterium acnes (strain DSM 16379 / KPA171202) (Propionibacterium acnes) protein is Small ribosomal subunit protein uS9.